The following is a 291-amino-acid chain: Exosome complex exonuclease RRP42 (291 aa).

N-acetylalanine is present on Ala2. The residue at position 116 (Lys116) is an N6-acetyllysine.

Belongs to the RNase PH family. As to quaternary structure, component of the RNA exosome core complex (Exo-9), composed of EXOSC1, EXOSC2, EXOSC3, EXOSC4, EXOSC5, EXOSC6, EXOSC7, EXOSC8 and EXOSC9; within the complex interacts with EXOSC2 and EXOSC4. The catalytically inactive RNA exosome core complex (Exo-9) associates with the catalytic subunit EXOSC10/RRP6. Exo-9 may associate with DIS3 to form the nucleolar exosome complex, or DIS3L to form the cytoplasmic exosome complex. Exo-9 is formed by a hexameric base ring consisting of the heterodimers EXOSC4-EXOSC9, EXOSC5-EXOSC8 and EXOSC6-EXOSC7, and a cap ring consisting of EXOSC1, EXOSC2 and EXOSC3. The RNA exosome complex associates with cofactors C1D/RRP47, MPHOSPH6/MPP6 and MTREX/MTR4. Interacts with ZC3HAV1. Interacts with DIS3; the interaction is direct.

The protein localises to the nucleus. Its subcellular location is the nucleolus. The protein resides in the cytoplasm. Non-catalytic component of the RNA exosome complex which has 3'-&gt;5' exoribonuclease activity and participates in a multitude of cellular RNA processing and degradation events. In the nucleus, the RNA exosome complex is involved in proper maturation of stable RNA species such as rRNA, snRNA and snoRNA, in the elimination of RNA processing by-products and non-coding 'pervasive' transcripts, such as antisense RNA species and promoter-upstream transcripts (PROMPTs), and of mRNAs with processing defects, thereby limiting or excluding their export to the cytoplasm. The RNA exosome may be involved in Ig class switch recombination (CSR) and/or Ig variable region somatic hypermutation (SHM) by targeting AICDA deamination activity to transcribed dsDNA substrates. In the cytoplasm, the RNA exosome complex is involved in general mRNA turnover and specifically degrades inherently unstable mRNAs containing AU-rich elements (AREs) within their 3' untranslated regions, and in RNA surveillance pathways, preventing translation of aberrant mRNAs. It seems to be involved in degradation of histone mRNA. The catalytic inactive RNA exosome core complex of 9 subunits (Exo-9) is proposed to play a pivotal role in the binding and presentation of RNA for ribonucleolysis, and to serve as a scaffold for the association with catalytic subunits and accessory proteins or complexes. The sequence is that of Exosome complex exonuclease RRP42 (Exosc7) from Mus musculus (Mouse).